Reading from the N-terminus, the 236-residue chain is Small ribosomal subunit protein eS6 (236 aa).

Phosphoserine is present on residues Ser232 and Ser233.

It belongs to the eukaryotic ribosomal protein eS6 family. Phosphorylated.

This chain is Small ribosomal subunit protein eS6 (RPS6), found in Eremothecium gossypii (strain ATCC 10895 / CBS 109.51 / FGSC 9923 / NRRL Y-1056) (Yeast).